The sequence spans 184 residues: Large ribosomal subunit protein uL5 (184 aa).

It belongs to the universal ribosomal protein uL5 family. As to quaternary structure, part of the 50S ribosomal subunit; part of the 5S rRNA/L5/L18/L25 subcomplex. Contacts the 5S rRNA and the P site tRNA. Forms a bridge to the 30S subunit in the 70S ribosome.

Functionally, this is one of the proteins that bind and probably mediate the attachment of the 5S RNA into the large ribosomal subunit, where it forms part of the central protuberance. In the 70S ribosome it contacts protein S13 of the 30S subunit (bridge B1b), connecting the 2 subunits; this bridge is implicated in subunit movement. Contacts the P site tRNA; the 5S rRNA and some of its associated proteins might help stabilize positioning of ribosome-bound tRNAs. The sequence is that of Large ribosomal subunit protein uL5 from Corynebacterium kroppenstedtii (strain DSM 44385 / JCM 11950 / CIP 105744 / CCUG 35717).